We begin with the raw amino-acid sequence, 113 residues long: Hydrogenase maturation factor HypA (113 aa).

Histidine 2 contributes to the Ni(2+) binding site. Residues cysteine 73, cysteine 75, cysteine 89, and cysteine 92 each contribute to the Zn(2+) site.

It belongs to the HypA/HybF family.

Functionally, involved in the maturation of [NiFe] hydrogenases. Required for nickel insertion into the metal center of the hydrogenase. The polypeptide is Hydrogenase maturation factor HypA (Methanocella arvoryzae (strain DSM 22066 / NBRC 105507 / MRE50)).